We begin with the raw amino-acid sequence, 194 residues long: ATP-dependent Clp protease proteolytic subunit (194 aa).

S97 serves as the catalytic Nucleophile. Residue H122 is part of the active site.

Belongs to the peptidase S14 family. Fourteen ClpP subunits assemble into 2 heptameric rings which stack back to back to give a disk-like structure with a central cavity, resembling the structure of eukaryotic proteasomes.

The protein resides in the cytoplasm. It carries out the reaction Hydrolysis of proteins to small peptides in the presence of ATP and magnesium. alpha-casein is the usual test substrate. In the absence of ATP, only oligopeptides shorter than five residues are hydrolyzed (such as succinyl-Leu-Tyr-|-NHMec, and Leu-Tyr-Leu-|-Tyr-Trp, in which cleavage of the -Tyr-|-Leu- and -Tyr-|-Trp bonds also occurs).. Functionally, cleaves peptides in various proteins in a process that requires ATP hydrolysis. Has a chymotrypsin-like activity. Plays a major role in the degradation of misfolded proteins. In Campylobacter jejuni subsp. jejuni serotype O:6 (strain 81116 / NCTC 11828), this protein is ATP-dependent Clp protease proteolytic subunit.